The sequence spans 234 residues: Lipoprotein-releasing system ATP-binding protein LolD 1 (234 aa).

The ABC transporter domain occupies 5–231; it reads IEARGIEKVF…RLTSNVRDPG (227 aa). Residue 41-48 participates in ATP binding; that stretch reads GASGSGKS.

The protein belongs to the ABC transporter superfamily. Lipoprotein translocase (TC 3.A.1.125) family. In terms of assembly, the complex is composed of two ATP-binding proteins (LolD) and two transmembrane proteins (LolC and LolE).

It is found in the cell inner membrane. Part of the ABC transporter complex LolCDE involved in the translocation of mature outer membrane-directed lipoproteins, from the inner membrane to the periplasmic chaperone, LolA. Responsible for the formation of the LolA-lipoprotein complex in an ATP-dependent manner. This chain is Lipoprotein-releasing system ATP-binding protein LolD 1, found in Caulobacter vibrioides (strain ATCC 19089 / CIP 103742 / CB 15) (Caulobacter crescentus).